A 1300-amino-acid chain; its full sequence is DNA-directed RNA polymerase subunit beta (1300 aa).

The protein belongs to the RNA polymerase beta chain family. The RNAP catalytic core consists of 2 alpha, 1 beta, 1 beta' and 1 omega subunit. When a sigma factor is associated with the core the holoenzyme is formed, which can initiate transcription.

The enzyme catalyses RNA(n) + a ribonucleoside 5'-triphosphate = RNA(n+1) + diphosphate. Functionally, DNA-dependent RNA polymerase catalyzes the transcription of DNA into RNA using the four ribonucleoside triphosphates as substrates. The polypeptide is DNA-directed RNA polymerase subunit beta (Chlorobium chlorochromatii (strain CaD3)).